A 424-amino-acid chain; its full sequence is Histidine--tRNA ligase (424 aa).

Belongs to the class-II aminoacyl-tRNA synthetase family. Homodimer.

It is found in the cytoplasm. It catalyses the reaction tRNA(His) + L-histidine + ATP = L-histidyl-tRNA(His) + AMP + diphosphate + H(+). The protein is Histidine--tRNA ligase of Shewanella frigidimarina (strain NCIMB 400).